Here is a 409-residue protein sequence, read N- to C-terminus: Serine/threonine transporter SstT (409 aa).

Helical transmembrane passes span 17–37 (LVGQ…FFPA), 49–69 (FVSA…MASI), 83–103 (ILLL…IASF), 142–162 (ALIS…GIAF), 180–200 (VSLI…GLVA), 218–238 (LVVL…LIVF), 301–321 (GAAI…GIAV), 331–351 (VVAS…LLLI), and 357–377 (LFGI…IIAI).

This sequence belongs to the dicarboxylate/amino acid:cation symporter (DAACS) (TC 2.A.23) family.

The protein localises to the cell inner membrane. It catalyses the reaction L-serine(in) + Na(+)(in) = L-serine(out) + Na(+)(out). It carries out the reaction L-threonine(in) + Na(+)(in) = L-threonine(out) + Na(+)(out). Involved in the import of serine and threonine into the cell, with the concomitant import of sodium (symport system). This is Serine/threonine transporter SstT from Pseudomonas aeruginosa (strain LESB58).